Here is a 417-residue protein sequence, read N- to C-terminus: Serine hydroxymethyltransferase (417 aa).

(6S)-5,6,7,8-tetrahydrofolate is bound by residues Leu-121 and 125–127 (GHL). Lys-229 bears the N6-(pyridoxal phosphate)lysine mark. 355-357 (SPF) provides a ligand contact to (6S)-5,6,7,8-tetrahydrofolate.

The protein belongs to the SHMT family. In terms of assembly, homodimer. Pyridoxal 5'-phosphate is required as a cofactor.

The protein resides in the cytoplasm. It catalyses the reaction (6R)-5,10-methylene-5,6,7,8-tetrahydrofolate + glycine + H2O = (6S)-5,6,7,8-tetrahydrofolate + L-serine. The protein operates within one-carbon metabolism; tetrahydrofolate interconversion. It participates in amino-acid biosynthesis; glycine biosynthesis; glycine from L-serine: step 1/1. In terms of biological role, catalyzes the reversible interconversion of serine and glycine with tetrahydrofolate (THF) serving as the one-carbon carrier. This reaction serves as the major source of one-carbon groups required for the biosynthesis of purines, thymidylate, methionine, and other important biomolecules. Also exhibits THF-independent aldolase activity toward beta-hydroxyamino acids, producing glycine and aldehydes, via a retro-aldol mechanism. In Klebsiella pneumoniae (strain 342), this protein is Serine hydroxymethyltransferase.